We begin with the raw amino-acid sequence, 74 residues long: Omega-conotoxin-like PuIIA (74 aa).

An N-terminal signal peptide occupies residues 1 to 22 (MKLTCVVIVAVLFLTACQLITA). The propeptide occupies 23–46 (ETYSRGEQKHRALSSTDKNSKLTR). 3 disulfide bridges follow: C48–C62, C55–C66, and C61–C73.

The protein belongs to the conotoxin O1 superfamily. As to expression, expressed by the venom duct.

The protein localises to the secreted. Omega-conotoxins act at presynaptic membranes, they bind and block voltage-gated calcium channels (Cav). The sequence is that of Omega-conotoxin-like PuIIA from Conus pulicarius (Flea-bitten cone).